Reading from the N-terminus, the 362-residue chain is Apelin receptor A (362 aa).

Topologically, residues 1-37 are extracellular; the sequence is METEGLSPMLYEDDYYYGNETGLQPCDETDWDFSYSL. Residue Asn-19 is glycosylated (N-linked (GlcNAc...) asparagine). 2 disulfides stabilise this stretch: Cys-26–Cys-286 and Cys-108–Cys-185. Residues 38-58 traverse the membrane as a helical segment; it reads LPVFYMIVFVLGLSGNGVVIF. The Cytoplasmic portion of the chain corresponds to 59 to 76; the sequence is TVWKSKPKRRSADTYIGN. The chain crosses the membrane as a helical span at residues 77–97; sequence LALADLAFVVTLPLWATYTAL. Residues 98–110 are Extracellular-facing; that stretch reads GFHWPFGSALCKL. Residues 111–131 traverse the membrane as a helical segment; the sequence is SSYLVLLNMFASVFCLTCLSF. At 132–151 the chain is on the cytoplasmic side; that stretch reads DRYLAIVHSLSSAKLRSRSS. The chain crosses the membrane as a helical span at residues 152–172; sequence IIVSLAVIWLFSGLLALPSLI. Topologically, residues 173–199 are extracellular; it reads LRDTRVEGNNTICDLDFSGVSSKENEN. Asn-181 carries N-linked (GlcNAc...) asparagine glycosylation. Residues 200-220 traverse the membrane as a helical segment; it reads FWIGGLSILTTVPGFLLPLLL. At 221–248 the chain is on the cytoplasmic side; the sequence is MTIFYCFIGGKVTMHFQNLKKEEQKKKR. The chain crosses the membrane as a helical span at residues 249–269; it reads LLKIIITLVVVFAICWLPFHI. The Extracellular portion of the chain corresponds to 270–296; it reads LKTIHFLDLMGFLELSCSTQNIIVSLH. The helical transmembrane segment at 297–317 threads the bilayer; it reads PYATCLAYVNSCLNPFLYAFF. The Cytoplasmic portion of the chain corresponds to 318–362; sequence DLRFRSQCFFFFGFKKVLQGHLSNTSSSLSAQTQKSEIHSLATKV.

This sequence belongs to the G-protein coupled receptor 1 family. In terms of tissue distribution, expressed in all blood vessels including the posterior cardinal vein, intersomitic veins and the vitelline vein network. At the gastrula stage, exclusively expressed in the mesodermal layer and at the neurula stage in the lateral plate mesoderm. Larval expression is observed in the endothelium of the primary blood vessels and the forming heart.

It is found in the cell membrane. Its function is as follows. G protein-coupled receptor for peptide hormones apelin (apln) and apelin receptor early endogenous ligand (apela), that plays a role in the regulation of normal cardiovascular function and fluid homeostasis. When acting as apelin receptor, activates both G(i) protein pathway that inhibits adenylate cyclase activity, and the beta-arrestin pathway that promotes internalization of the receptor. Also functions as mechanoreceptor that is activated by pathological stimuli in a G-protein-independent fashion to induce beta-arrestin signaling, hence eliciting cardiac hypertrophy. However, the presence of apelin ligand blunts cardiac hypertrophic induction from APLNR/APJ on response to pathological stimuli. Plays a key role in early development such as gastrulation, blood vessels formation and heart morphogenesis by acting as a receptor for apela hormone, promoting endoderm and mesendoderm cell migration and regulating the migration of cells fated to become myocardial progenitors, respectively. Promotes angioblast migration toward the embryonic midline, i.e. the position of the future vessel formation, during vasculogenesis. May promote sinus venosus (SV)-derived endothelial cells migration into the developing heart to promote coronary blood vessel development. Required for cardiovascular development, particularly for intersomitic vein angiogenesis by acting as a receptor for apln hormone. Also plays a role in various processes in adults such as regulation of blood vessel formation, blood pressure, heart contractility, and heart failure. Acts upstream of the i/o type of G-alpha proteins in the differentiation of endothelium, erythroid cells, myeloid cells and cardiomyocytes. The sequence is that of Apelin receptor A (aplnr-a) from Xenopus laevis (African clawed frog).